A 201-amino-acid polypeptide reads, in one-letter code: Ribosome maturation factor RimM (201 aa).

The PRC barrel domain occupies 92-166 (DEDEFYHADL…RVVVEPPANF (75 aa)). The segment at 169–201 (PAGPQPAEGEEMPDGALEALEGEEAGAGTAPQP) is disordered.

This sequence belongs to the RimM family. Binds ribosomal protein uS19.

The protein resides in the cytoplasm. Functionally, an accessory protein needed during the final step in the assembly of 30S ribosomal subunit, possibly for assembly of the head region. Essential for efficient processing of 16S rRNA. May be needed both before and after RbfA during the maturation of 16S rRNA. It has affinity for free ribosomal 30S subunits but not for 70S ribosomes. The sequence is that of Ribosome maturation factor RimM from Rhodospirillum centenum (strain ATCC 51521 / SW).